A 73-amino-acid polypeptide reads, in one-letter code: Neurotoxin Cex13 (73 aa).

The signal sequence occupies residues 1–7; the sequence is ATGNVWA. The 64-residue stretch at 8–71 folds into the LCN-type CS-alpha/beta domain; sequence KDGYLVIIKT…TWPLPDKTCG (64 aa). 4 disulfides stabilise this stretch: Cys-19/Cys-70, Cys-23/Cys-46, Cys-32/Cys-51, and Cys-36/Cys-53. Cysteine amide is present on Cys-70. The propeptide occupies 71–73; the sequence is GTK.

It belongs to the long (4 C-C) scorpion toxin superfamily. Sodium channel inhibitor family. Beta subfamily. In terms of tissue distribution, expressed by the venom gland.

Its subcellular location is the secreted. Its function is as follows. Beta toxins bind voltage-independently at site-4 of sodium channels (Nav) and shift the voltage of activation toward more negative potentials thereby affecting sodium channel activation and promoting spontaneous and repetitive firing. The protein is Neurotoxin Cex13 of Centruroides exilicauda (Bark scorpion).